A 388-amino-acid chain; its full sequence is Pepsin A (388 aa).

The first 15 residues, 1 to 15 (MKWLLLLGLVALSEC), serve as a signal peptide directing secretion. Positions 16–62 (IIYKVPLVRKKSLRRNLSEHGLLKDFLKKHNRNPASKYFPQTEAPTL) are cleaved as a propeptide — activation peptide. The 310-residue stretch at 76-385 (YFGTIGIGTP…DRANNQVGLA (310 aa)) folds into the Peptidase A1 domain. D94 is a catalytic residue. C107 and C112 are joined by a disulfide. A Phosphoserine modification is found at S130. Cysteines 268 and 272 form a disulfide. D277 is a catalytic residue. A disulfide bond links C311 and C344.

Belongs to the peptidase A1 family.

The protein localises to the secreted. The catalysed reaction is Preferential cleavage: hydrophobic, preferably aromatic, residues in P1 and P1' positions. Cleaves 1-Phe-|-Val-2, 4-Gln-|-His-5, 13-Glu-|-Ala-14, 14-Ala-|-Leu-15, 15-Leu-|-Tyr-16, 16-Tyr-|-Leu-17, 23-Gly-|-Phe-24, 24-Phe-|-Phe-25 and 25-Phe-|-Tyr-26 bonds in the B chain of insulin.. Functionally, shows particularly broad specificity; although bonds involving phenylalanine and leucine are preferred, many others are also cleaved to some extent. In Macaca mulatta (Rhesus macaque), this protein is Pepsin A (PGA).